The sequence spans 72 residues: uncharacterized protein (72 aa).

It is found in the cytoplasm. Its subcellular location is the nucleus. This is an uncharacterized protein from Saccharomyces cerevisiae (strain ATCC 204508 / S288c) (Baker's yeast).